The following is a 699-amino-acid chain: Catalase-peroxidase (699 aa).

The segment at residues 72–200 (WHSAGTYRIA…LAAVMMGLIY (129 aa)) is a cross-link (tryptophyl-tyrosyl-methioninium (Trp-Tyr) (with M-226)). The active-site Proton acceptor is H73. Residues 200–226 (YVNPEGVDGNPDPLKTAKDMRVTFARM) constitute a cross-link (tryptophyl-tyrosyl-methioninium (Tyr-Met) (with W-72)). H241 is a binding site for heme b.

Belongs to the peroxidase family. Peroxidase/catalase subfamily. Homodimer or homotetramer. Requires heme b as cofactor. In terms of processing, formation of the three residue Trp-Tyr-Met cross-link is important for the catalase, but not the peroxidase activity of the enzyme.

It carries out the reaction H2O2 + AH2 = A + 2 H2O. The catalysed reaction is 2 H2O2 = O2 + 2 H2O. Bifunctional enzyme with both catalase and broad-spectrum peroxidase activity. In Aeromonas salmonicida (strain A449), this protein is Catalase-peroxidase.